Reading from the N-terminus, the 198-residue chain is Small ribosomal subunit protein uS4 (198 aa).

The S4 RNA-binding domain occupies 91 to 154; it reads SRLDNVVYRL…KNLNIVQEAV (64 aa).

The protein belongs to the universal ribosomal protein uS4 family. As to quaternary structure, part of the 30S ribosomal subunit. Contacts protein S5. The interaction surface between S4 and S5 is involved in control of translational fidelity.

Its function is as follows. One of the primary rRNA binding proteins, it binds directly to 16S rRNA where it nucleates assembly of the body of the 30S subunit. With S5 and S12 plays an important role in translational accuracy. This is Small ribosomal subunit protein uS4 from Onion yellows phytoplasma (strain OY-M).